Consider the following 490-residue polypeptide: Cytochrome P450 2C7 (490 aa).

The residue at position 144 (arginine 144) is a Dimethylated arginine. A heme-binding site is contributed by cysteine 435.

The protein belongs to the cytochrome P450 family. Heme is required as a cofactor.

Its subcellular location is the endoplasmic reticulum membrane. The protein resides in the microsome membrane. The enzyme catalyses an organic molecule + reduced [NADPH--hemoprotein reductase] + O2 = an alcohol + oxidized [NADPH--hemoprotein reductase] + H2O + H(+). Cytochromes P450 are a group of heme-thiolate monooxygenases. In liver microsomes, this enzyme is involved in an NADPH-dependent electron transport pathway. It oxidizes a variety of structurally unrelated compounds, including steroids, fatty acids, and xenobiotics. This Rattus norvegicus (Rat) protein is Cytochrome P450 2C7 (Cyp2c7).